We begin with the raw amino-acid sequence, 165 residues long: MFNKLHLVSLLACGLFVIAQANTVKKCEKKMPASLKSQLCEIRKYKLLDTPDMDKHMDCVMKALDFVRPDGTGDYHKLIKPLNAIEKDRKHDFNLEKCGGQTQHLPVGKRANAYYKCLVESTSGDAFKKVFDTVELVKAKKLPALSQYSSVVDKLMKKIDDKICN.

Residues 1–21 (MFNKLHLVSLLACGLFVIAQA) form the signal peptide. 3 disulfide bridges follow: cysteine 27–cysteine 59, cysteine 40–cysteine 164, and cysteine 98–cysteine 117. Glutamate 28, histidine 56, tyrosine 115, aspartate 132, and glutamate 135 together coordinate serotonin. Histamine-binding residues include tyrosine 115, aspartate 132, and glutamate 135.

This sequence belongs to the PBP/GOBP family. In terms of tissue distribution, female salivary gland. Not detected in female carcass without salivary glands. Not detected in male tissues.

It is found in the secreted. Functionally, modulates blood feeding of female mosquitoes on vertebrate species by binding and sequestering different mediators involved in the host response. Binds serotonin and histamine. Increases blood clotting time. The polypeptide is Short form salivary protein D7R1 (Anopheles gambiae (African malaria mosquito)).